The following is a 367-amino-acid chain: Phosphoribosylaminoimidazole-succinocarboxamide synthase (367 aa).

It belongs to the SAICAR synthetase family.

The catalysed reaction is 5-amino-1-(5-phospho-D-ribosyl)imidazole-4-carboxylate + L-aspartate + ATP = (2S)-2-[5-amino-1-(5-phospho-beta-D-ribosyl)imidazole-4-carboxamido]succinate + ADP + phosphate + 2 H(+). The protein operates within purine metabolism; IMP biosynthesis via de novo pathway; 5-amino-1-(5-phospho-D-ribosyl)imidazole-4-carboxamide from 5-amino-1-(5-phospho-D-ribosyl)imidazole-4-carboxylate: step 1/2. In Shewanella piezotolerans (strain WP3 / JCM 13877), this protein is Phosphoribosylaminoimidazole-succinocarboxamide synthase.